The primary structure comprises 394 residues: Probable fatty acid methyltransferase (394 aa).

S-adenosyl-L-methionine-binding positions include 128-129 (YS), 163-171 (LLDVGCGWG), and 189-194 (TLSKEQ). Residue cysteine 358 is part of the active site.

This sequence belongs to the CFA/CMAS family.

The chain is Probable fatty acid methyltransferase from Pseudomonas putida (Arthrobacter siderocapsulatus).